The chain runs to 346 residues: Holliday junction branch migration complex subunit RuvB (346 aa).

Residues 1-181 form a large ATPase domain (RuvB-L) region; the sequence is MSDRNPLIDA…FGIPVRLNFY (181 aa). Residues leucine 20, arginine 21, glycine 62, lysine 65, threonine 66, threonine 67, 128-130, arginine 171, tyrosine 181, and arginine 218 each bind ATP; that span reads EDF. Threonine 66 contacts Mg(2+). The interval 182-252 is small ATPAse domain (RuvB-S); it reads TVEELEYIVR…IADEALSRLE (71 aa). Positions 255 to 346 are head domain (RuvB-H); the sequence is NRGLDQLDRR…SQYGLFMEDE (92 aa). The DNA site is built by arginine 291, arginine 310, and arginine 315.

Belongs to the RuvB family. In terms of assembly, homohexamer. Forms an RuvA(8)-RuvB(12)-Holliday junction (HJ) complex. HJ DNA is sandwiched between 2 RuvA tetramers; dsDNA enters through RuvA and exits via RuvB. An RuvB hexamer assembles on each DNA strand where it exits the tetramer. Each RuvB hexamer is contacted by two RuvA subunits (via domain III) on 2 adjacent RuvB subunits; this complex drives branch migration. In the full resolvosome a probable DNA-RuvA(4)-RuvB(12)-RuvC(2) complex forms which resolves the HJ.

The protein localises to the cytoplasm. It catalyses the reaction ATP + H2O = ADP + phosphate + H(+). In terms of biological role, the RuvA-RuvB-RuvC complex processes Holliday junction (HJ) DNA during genetic recombination and DNA repair, while the RuvA-RuvB complex plays an important role in the rescue of blocked DNA replication forks via replication fork reversal (RFR). RuvA specifically binds to HJ cruciform DNA, conferring on it an open structure. The RuvB hexamer acts as an ATP-dependent pump, pulling dsDNA into and through the RuvAB complex. RuvB forms 2 homohexamers on either side of HJ DNA bound by 1 or 2 RuvA tetramers; 4 subunits per hexamer contact DNA at a time. Coordinated motions by a converter formed by DNA-disengaged RuvB subunits stimulates ATP hydrolysis and nucleotide exchange. Immobilization of the converter enables RuvB to convert the ATP-contained energy into a lever motion, pulling 2 nucleotides of DNA out of the RuvA tetramer per ATP hydrolyzed, thus driving DNA branch migration. The RuvB motors rotate together with the DNA substrate, which together with the progressing nucleotide cycle form the mechanistic basis for DNA recombination by continuous HJ branch migration. Branch migration allows RuvC to scan DNA until it finds its consensus sequence, where it cleaves and resolves cruciform DNA. The sequence is that of Holliday junction branch migration complex subunit RuvB from Brucella melitensis biotype 2 (strain ATCC 23457).